Here is a 340-residue protein sequence, read N- to C-terminus: MIQDEIPIPVQTLQWKCIESKKEGKRLHYGRFAVSPFRKGQASTVGVAMRRALLGEVEGTSITYAKFKNVVHEYSTLVGIKESIHDILINLKEIVLQSDSYETQKASISILGPRDVTAGDILLPTSVKIIDASQHIATITTAIPLDVELRIERDCGYRTLNLKESQSGEFFIDALFTPIRNANYSIHSFESNNKVREILFLEVWTNGSLTPGAALSEASRDLIDLFIIFLNMEKEESIKEIENNELNIKNFPSTSISVDIDRMAKEVAFKQIFIDQLELPARAYNCLKKMQVHTVSDLLKYTQYDLKKVKNFGNKSVEQVVEALQERFAIQLPKDQFNIS.

The segment at 1–233 (MIQDEIPIPV…DLFIIFLNME (233 aa)) is alpha N-terminal domain (alpha-NTD). The tract at residues 264–340 (AKEVAFKQIF…QLPKDQFNIS (77 aa)) is alpha C-terminal domain (alpha-CTD).

The protein belongs to the RNA polymerase alpha chain family. In terms of assembly, in plastids the minimal PEP RNA polymerase catalytic core is composed of four subunits: alpha, beta, beta', and beta''. When a (nuclear-encoded) sigma factor is associated with the core the holoenzyme is formed, which can initiate transcription.

It is found in the plastid. Its subcellular location is the chloroplast. It catalyses the reaction RNA(n) + a ribonucleoside 5'-triphosphate = RNA(n+1) + diphosphate. Functionally, DNA-dependent RNA polymerase catalyzes the transcription of DNA into RNA using the four ribonucleoside triphosphates as substrates. The protein is DNA-directed RNA polymerase subunit alpha of Psilotum nudum (Whisk fern).